Reading from the N-terminus, the 155-residue chain is Probable cyclic pyranopterin monophosphate synthase (155 aa).

Substrate is bound by residues M74 to H76 and M110 to E111. D125 is an active-site residue.

Belongs to the MoaC family. Homohexamer; trimer of dimers.

The catalysed reaction is (8S)-3',8-cyclo-7,8-dihydroguanosine 5'-triphosphate = cyclic pyranopterin phosphate + diphosphate. Its pathway is cofactor biosynthesis; molybdopterin biosynthesis. In terms of biological role, catalyzes the conversion of (8S)-3',8-cyclo-7,8-dihydroguanosine 5'-triphosphate to cyclic pyranopterin monophosphate (cPMP). This Methanoregula boonei (strain DSM 21154 / JCM 14090 / 6A8) protein is Probable cyclic pyranopterin monophosphate synthase.